We begin with the raw amino-acid sequence, 453 residues long: Serine--tRNA ligase (453 aa).

249-251 serves as a coordination point for L-serine; that stretch reads TSE. ATP-binding positions include 280 to 282 and valine 296; that span reads RKE. Glutamate 303 is an L-serine binding site. 367–370 lines the ATP pocket; it reads EMVS. Threonine 404 lines the L-serine pocket.

This sequence belongs to the class-II aminoacyl-tRNA synthetase family. Type-1 seryl-tRNA synthetase subfamily. As to quaternary structure, homodimer. The tRNA molecule binds across the dimer.

Its subcellular location is the cytoplasm. It carries out the reaction tRNA(Ser) + L-serine + ATP = L-seryl-tRNA(Ser) + AMP + diphosphate + H(+). It catalyses the reaction tRNA(Sec) + L-serine + ATP = L-seryl-tRNA(Sec) + AMP + diphosphate + H(+). It participates in aminoacyl-tRNA biosynthesis; selenocysteinyl-tRNA(Sec) biosynthesis; L-seryl-tRNA(Sec) from L-serine and tRNA(Sec): step 1/1. Its function is as follows. Catalyzes the attachment of serine to tRNA(Ser). Is also able to aminoacylate tRNA(Sec) with serine, to form the misacylated tRNA L-seryl-tRNA(Sec), which will be further converted into selenocysteinyl-tRNA(Sec). This chain is Serine--tRNA ligase, found in Archaeoglobus fulgidus (strain ATCC 49558 / DSM 4304 / JCM 9628 / NBRC 100126 / VC-16).